A 433-amino-acid polypeptide reads, in one-letter code: DNA methyltransferase 1-associated protein 1 (433 aa).

The tract at residues 1 to 204 (MSADVRDILD…EVVALLAKAK (204 aa)) is required for nuclear localization. One can recognise a Myb-like domain in the interval 148–197 (NNWSKVQTDHLFDLARRFDLRFIVMADRWNRQQHGTKTVEELKERYYEVV). Residues 186–281 (VEELKERYYE…ADQQNEHASN (96 aa)) adopt a coiled-coil conformation. Positions 252 to 264 (EARKKERERKTQD) are enriched in basic and acidic residues. The tract at residues 252–305 (EARKKERERKTQDLQKLISQADQQNEHASNTPSTRKYEKKLHKKKVHQQPRPSR) is disordered. A compositionally biased stretch (polar residues) spans 268–285 (LISQADQQNEHASNTPST). Basic residues predominate over residues 288 to 299 (YEKKLHKKKVHQ).

As to quaternary structure, interacts with Rel. Interacts with akirin and Bap55.

It localises to the nucleus. The protein localises to the cytoplasm. Functionally, involved in transcription repression and activation. Required for larvae and pupal development, and for normal innate immune responses. Involved in modulating the activation of the immune deficiency pathway (Imd), acting either downstream of, or at the level of, the NF-kappa-B factor Rel. Possibly functions with akirin to regulate Rel, and its interaction with the Brahma complex protein Bap55 suggests that it may regulate the IMD pathway at the level of chromatin remodeling. The chain is DNA methyltransferase 1-associated protein 1 from Drosophila melanogaster (Fruit fly).